Consider the following 435-residue polypeptide: Protein deadpan (435 aa).

Low complexity predominate over residues 18 to 27 (GYSDSYGSNG). Positions 18-48 (GYSDSYGSNGRMSNPNGLSKAELRKTNKPIM) are disordered. In terms of domain architecture, bHLH spans 40-97 (LRKTNKPIMEKRRRARINHCLNELKSLILEAMKKDPARHTKLEKADILEMTVKHLQSV). In terms of domain architecture, Orange spans 116 to 149 (FKTGFVECAEEVNRYVSQMDGIDTGVRQRLSAHL). Disordered stretches follow at residues 305–334 (QLPV…AASP) and 349–416 (STPP…DEPS). The span at 311–324 (STSPPLSPISSISS) shows a compositional bias: low complexity. Composition is skewed to polar residues over residues 355 to 378 (SAET…SSGC) and 385 to 395 (LQQQQVSSTSG). Phosphoserine occurs at positions 407, 408, and 411. The WRPW motif signature appears at 432–435 (WRPW).

In terms of assembly, homodimer. Heterodimer with E(spl)mgamma-HLH and E(spl). Transcription repression requires formation of a complex with the corepressor protein Groucho. Interacts (via bHLH motif) with sisA. Interacts with da.

Its subcellular location is the nucleus. Transcriptional repressor of genes that require a bHLH protein for their transcription. In the larval brain, required to maintain the self-renewal and identity of type II neuroblasts by regulating the expression of the transcriptional repressor erm together with other self-renewal transcriptional repressors such as klu and E(spl)mgamma-HLH. As part of its role in neuroblasts development, has been shown to be a direct target of the Notch signaling pathway, however might work also independently of N/Notch. In the developing larval and pupal brain, required for mushroom body differentiation. Involved in sex determination and SXL transcription repression when in complex with the corepressor protein Groucho. This Drosophila melanogaster (Fruit fly) protein is Protein deadpan (dpn).